The sequence spans 98 residues: uncharacterized protein (98 aa).

The segment covering 1 to 10 has biased composition (basic residues); the sequence is MARRRKPLHR. The disordered stretch occupies residues 1–21; it reads MARRRKPLHRQRPEPPSWALR.

This is an uncharacterized protein from Mycobacterium bovis (strain ATCC BAA-935 / AF2122/97).